A 257-amino-acid chain; its full sequence is Phosphate import ATP-binding protein PstB (257 aa).

The ABC transporter domain occupies 11–252; the sequence is FNISRLYLYI…PKNELTEKYV (242 aa). Residue 43–50 coordinates ATP; it reads GPSGSGKS.

Belongs to the ABC transporter superfamily. Phosphate importer (TC 3.A.1.7) family. As to quaternary structure, the complex is composed of two ATP-binding proteins (PstB), two transmembrane proteins (PstC and PstA) and a solute-binding protein (PstS).

The protein resides in the cell membrane. The enzyme catalyses phosphate(out) + ATP + H2O = ADP + 2 phosphate(in) + H(+). Its function is as follows. Part of the ABC transporter complex PstSACB involved in phosphate import. Responsible for energy coupling to the transport system. The protein is Phosphate import ATP-binding protein PstB of Saccharolobus solfataricus (strain ATCC 35092 / DSM 1617 / JCM 11322 / P2) (Sulfolobus solfataricus).